A 301-amino-acid polypeptide reads, in one-letter code: NAD kinase (301 aa).

D81 (proton acceptor) is an active-site residue. NAD(+) contacts are provided by residues 81-82, 155-156, H166, R183, D185, 196-201, and Q256; these read DG, NE, and TAYSLS.

Belongs to the NAD kinase family. It depends on a divalent metal cation as a cofactor.

It is found in the cytoplasm. The enzyme catalyses NAD(+) + ATP = ADP + NADP(+) + H(+). Functionally, involved in the regulation of the intracellular balance of NAD and NADP, and is a key enzyme in the biosynthesis of NADP. Catalyzes specifically the phosphorylation on 2'-hydroxyl of the adenosine moiety of NAD to yield NADP. In Mannheimia succiniciproducens (strain KCTC 0769BP / MBEL55E), this protein is NAD kinase.